Reading from the N-terminus, the 351-residue chain is Peptide chain release factor 1 (351 aa).

Glutamine 229 is modified (N5-methylglutamine).

The protein belongs to the prokaryotic/mitochondrial release factor family. Post-translationally, methylated by PrmC. Methylation increases the termination efficiency of RF1.

The protein resides in the cytoplasm. Functionally, peptide chain release factor 1 directs the termination of translation in response to the peptide chain termination codons UAG and UAA. In Ruegeria pomeroyi (strain ATCC 700808 / DSM 15171 / DSS-3) (Silicibacter pomeroyi), this protein is Peptide chain release factor 1.